Here is a 282-residue protein sequence, read N- to C-terminus: Elongation factor Ts (282 aa).

Residues 80–83 (TDFV) are involved in Mg(2+) ion dislocation from EF-Tu.

It belongs to the EF-Ts family.

Its subcellular location is the cytoplasm. Functionally, associates with the EF-Tu.GDP complex and induces the exchange of GDP to GTP. It remains bound to the aminoacyl-tRNA.EF-Tu.GTP complex up to the GTP hydrolysis stage on the ribosome. In Aliivibrio salmonicida (strain LFI1238) (Vibrio salmonicida (strain LFI1238)), this protein is Elongation factor Ts.